The chain runs to 1944 residues: uncharacterized protein (1944 aa).

A disordered region spans residues 908–999 (SQNLNFLKSK…SESEEESSNG (92 aa)). 2 stretches are compositionally biased toward basic and acidic residues: residues 916–929 (SKQE…ESAK) and 939–949 (LSEKLNSDNHI). Positions 985–996 (SDEDTSESEEES) are enriched in acidic residues. 1293 to 1300 (GPPGTGKT) provides a ligand contact to ATP. Positions 1824-1944 (QEAHKVKKRH…PPKVEHFKRK (121 aa)) are disordered. Composition is skewed to basic and acidic residues over residues 1843 to 1852 (GTERDEDIPN) and 1869 to 1891 (KVTK…KIDE). A compositionally biased stretch (basic residues) spans 1912-1922 (GHMKKSKKPKS).

The protein belongs to the DNA2/NAM7 helicase family.

The protein resides in the nucleus. This is an uncharacterized protein from Schizosaccharomyces pombe (strain 972 / ATCC 24843) (Fission yeast).